An 895-amino-acid chain; its full sequence is MSTGIRRRHADEKKNILEKESLQNDETQREMEKDISLLRPAHWNFIGLFFLVLIIGTTFLHKCLPEPKDPNQEETQFSEKRAVKVLQELSDYGWKPAGSYNCEELTRNRILKELNDIRSQNQNVENLRFDIDTQYVSGCFDIPAHDTEGMNICYRNVSNVMARLGKGEKKDKISVLLNCHYDSWPTSNAGSDDLSSCALMLELIRLYSKNPHLLNHDVIFLFNGAEESSLLAAHGFITQHSWRHEIRAFINLEASGSGGRELLFQAGPANQWLLNSYLEAAIHPHCSVIGQEVFQSGVYPGDTDFRIFRDHGRVPGLDLAFVQNGYWWHTEFDTAERITKGSLQRAGENVYSTLNHLLKSPYLEKPAEYADRKTVFFDFLGLFVIIYPLSIAHLVNMLTICTVIALMSHRFYSKTFITFLALRDYVLTILTIALVLKAMTFMSLFTYGALRWYTRHWLALVAYGLPSVWAGISVQGLLTARLAPKAREEYGSTLELIHLTLISGILLAFTYYDIASGFLFALLLVPAIKSIITYFGAWPTCPTFNTILTLILSFPGCAMAIYTTEMLLSIFIPIMGRSSYNPEPAVSFFVAFSAGCIVLSLGGLVAKSRNSRSSNEAGLLELIYNILGVLLVTLTILYVFSSFWPSPYRFDNVYPTAKRTQFFHVNQMLYDRNGQISVNDTRFYAISHDYRGAEDIPFVKKDPEYTGLQCHYENNPWCETPFLFPTKGRLNERNIRVRSVDERLKFKHPVKILGISKRHGVDSKDGKGNIEYSFSVIGTGQISVYIIPDTTWLITNTSVTQPKTPQENMFLYYTCSTPNNICEWMFKVTIKKTTQTPSDDKPLLIGISSHYLHGPEMQSESIKNMIAKIQENRVNSPEWTVTASAWNVDQVYKYF.

A disordered region spans residues 1–27 (MSTGIRRRHADEKKNILEKESLQNDET). The Cytoplasmic segment spans residues 1–39 (MSTGIRRRHADEKKNILEKESLQNDETQREMEKDISLLR). A compositionally biased stretch (basic and acidic residues) spans 9 to 27 (HADEKKNILEKESLQNDET). The chain crosses the membrane as a helical span at residues 40 to 60 (PAHWNFIGLFFLVLIIGTTFL). Over 61–374 (HKCLPEPKDP…KPAEYADRKT (314 aa)) the chain is Lumenal. Asparagine 156 is a glycosylation site (N-linked (GlcNAc...) asparagine). The Zn(2+) site is built by histidine 180 and aspartate 192. The Proton acceptor role is filled by glutamate 226. Residues glutamate 227, glutamate 253, and histidine 329 each contribute to the Zn(2+) site. A helical membrane pass occupies residues 375–395 (VFFDFLGLFVIIYPLSIAHLV). Residues 396–424 (NMLTICTVIALMSHRFYSKTFITFLALRD) lie on the Cytoplasmic side of the membrane. The chain crosses the membrane as a helical span at residues 425 to 445 (YVLTILTIALVLKAMTFMSLF). Topologically, residues 446–457 (TYGALRWYTRHW) are lumenal. The chain crosses the membrane as a helical span at residues 458 to 478 (LALVAYGLPSVWAGISVQGLL). Topologically, residues 479–489 (TARLAPKAREE) are cytoplasmic. Residues 490-512 (YGSTLELIHLTLISGILLAFTYY) form a helical membrane-spanning segment. Residues 513 to 515 (DIA) are Lumenal-facing. A helical membrane pass occupies residues 516–538 (SGFLFALLLVPAIKSIITYFGAW). At 539 to 553 (PTCPTFNTILTLILS) the chain is on the cytoplasmic side. The helical transmembrane segment at 554-574 (FPGCAMAIYTTEMLLSIFIPI) threads the bilayer. Residues 575-584 (MGRSSYNPEP) lie on the Lumenal side of the membrane. The chain crosses the membrane as a helical span at residues 585–605 (AVSFFVAFSAGCIVLSLGGLV). Residues 606–619 (AKSRNSRSSNEAGL) lie on the Cytoplasmic side of the membrane. The helical transmembrane segment at 620-640 (LELIYNILGVLLVTLTILYVF) threads the bilayer. Topologically, residues 641–895 (SSFWPSPYRF…WNVDQVYKYF (255 aa)) are lumenal. N-linked (GlcNAc...) asparagine glycans are attached at residues asparagine 679 and asparagine 796.

The protein belongs to the peptidase M28 family. Zn(2+) is required as a cofactor.

It is found in the endoplasmic reticulum membrane. This chain is Putative endoplasmic reticulum metallopeptidase 1-B, found in Caenorhabditis elegans.